Reading from the N-terminus, the 87-residue chain is Small ribosomal subunit protein bS18 (87 aa).

This sequence belongs to the bacterial ribosomal protein bS18 family. In terms of assembly, part of the 30S ribosomal subunit. Forms a tight heterodimer with protein bS6.

Functionally, binds as a heterodimer with protein bS6 to the central domain of the 16S rRNA, where it helps stabilize the platform of the 30S subunit. The sequence is that of Small ribosomal subunit protein bS18 from Campylobacter hominis (strain ATCC BAA-381 / DSM 21671 / CCUG 45161 / LMG 19568 / NCTC 13146 / CH001A).